Here is a 356-residue protein sequence, read N- to C-terminus: Arginine kinase (356 aa).

Positions 9 to 91 (KLEAGFQKLQ…FDPIIEDYHI (83 aa)) constitute a Phosphagen kinase N-terminal domain. 64–68 (GVGIY) is an L-arginine binding site. The region spanning 119 to 356 (FVISTRVRCG…AELIKLEQSA (238 aa)) is the Phosphagen kinase C-terminal domain. ATP contacts are provided by residues 122–126 (STRVR) and His185. L-arginine is bound at residue Glu225. Arg229 is a binding site for ATP. L-arginine is bound at residue Cys271. ATP contacts are provided by residues 280–284 (RASVH) and 309–314 (RGTRGE). Residue Glu314 participates in L-arginine binding.

This sequence belongs to the ATP:guanido phosphotransferase family.

It catalyses the reaction L-arginine + ATP = N(omega)-phospho-L-arginine + ADP + H(+). The chain is Arginine kinase (ARGK) from Artemia franciscana (Brine shrimp).